We begin with the raw amino-acid sequence, 655 residues long: MKRTIKYLSFLGLIPFLSITTISCVKQAKENNNKNQLISQFKQLIFILNSFDLDNKKLESKIIKAIEKSDFNKISNINLELTIKFLTRIKNELETKTISQLNKNDKLDILTKIKVHLGSLNLIELVNIVDELVNKLNQKEEIKNTHKDKIEKNKDNIEDIDDSKLEILESKYIPNQHNYPDYVKNFKTVSAEEIYKELYDRTFSIKFLVKLKDGGLLSNGTGTGWLLDYHKYSNTNKYKMFIATNLHVLADFSNSLTDEQNKEFNYYDPSGNKVIGLGLGKADNVTDFSRKNNNSKSENNIANYYLNNQDFENYLKNDFWSVNKFSKGISEPKIVFGAVDFMKDRAIKNHYEALQKEAINYYNYKKNNNEINDDNKIAWNNFLNNKDIPIMIDFAVFEFDVDLDLVDYNLKSWISNAISGLDNYLDRLNKAPILPNQDKKISKYLQTTDYVSALFKKDKSEQNLYNAKDIYIAGYPTSQYSRSVWMQNNPIERNSSTLTSNWRSPTNDKTFAFANEVEEKAGTGLNFNIHDNYWHRVFATFYGYQYNINFSSLYYGASGSLAYNEFGQMIGIYNNVKSNVEFGDLLQSATIAPFLQSDNIKVGDNIIYAYNLIDGTDKTKYKYQKSSFRENLQKLYPNGFSDGLKSTKLFDDIFN.

An N-terminal signal peptide occupies residues 1–23 (MKRTIKYLSFLGLIPFLSITTIS). Cysteine 24 carries N-palmitoyl cysteine lipidation. Cysteine 24 carries S-diacylglycerol cysteine lipidation.

The protein belongs to the MG067/MG068/MG395 family.

The protein resides in the cell membrane. This is an uncharacterized protein from Mycoplasma capricolum subsp. capricolum (strain California kid / ATCC 27343 / NCTC 10154).